A 426-amino-acid polypeptide reads, in one-letter code: Enolase (426 aa).

Residues threonine 32–aspartate 53 are disordered. Glutamine 163 contacts (2R)-2-phosphoglycerate. Glutamate 205 acts as the Proton donor in catalysis. Mg(2+) is bound by residues aspartate 242, glutamate 285, and aspartate 312. (2R)-2-phosphoglycerate is bound by residues lysine 337, arginine 366, serine 367, and lysine 388. The Proton acceptor role is filled by lysine 337.

Belongs to the enolase family. It depends on Mg(2+) as a cofactor.

Its subcellular location is the cytoplasm. The protein localises to the secreted. The protein resides in the cell surface. The enzyme catalyses (2R)-2-phosphoglycerate = phosphoenolpyruvate + H2O. It participates in carbohydrate degradation; glycolysis; pyruvate from D-glyceraldehyde 3-phosphate: step 4/5. In terms of biological role, catalyzes the reversible conversion of 2-phosphoglycerate (2-PG) into phosphoenolpyruvate (PEP). It is essential for the degradation of carbohydrates via glycolysis. In Hyphomonas neptunium (strain ATCC 15444), this protein is Enolase.